Here is a 396-residue protein sequence, read N- to C-terminus: Elongation factor Tu (396 aa).

The tr-type G domain maps to K10–V206. Positions G19 to T26 are G1. G19 to T26 is a GTP binding site. T26 lines the Mg(2+) pocket. The segment at G60 to S64 is G2. The G3 stretch occupies residues D81–G84. GTP-binding positions include D81–H85 and N136–D139. A G4 region spans residues N136–D139. The interval S174–L176 is G5.

The protein belongs to the TRAFAC class translation factor GTPase superfamily. Classic translation factor GTPase family. EF-Tu/EF-1A subfamily. In terms of assembly, monomer.

It is found in the cytoplasm. It catalyses the reaction GTP + H2O = GDP + phosphate + H(+). Its function is as follows. GTP hydrolase that promotes the GTP-dependent binding of aminoacyl-tRNA to the A-site of ribosomes during protein biosynthesis. The sequence is that of Elongation factor Tu from Legionella pneumophila (strain Paris).